The sequence spans 80 residues: Phage shock protein G (80 aa).

2 consecutive transmembrane segments (helical) span residues 5 to 25 and 41 to 61; these read LFVIGFFVMLMVTGVSLLGII and LALMIKLLPWLLLAIAVVWVI.

It is found in the cell inner membrane. In terms of biological role, effector of the phage shock response. The polypeptide is Phage shock protein G (pspG) (Escherichia coli (strain K12)).